A 40-amino-acid chain; its full sequence is Photosystem II reaction center protein J (40 aa).

Residues 8–28 (IPLWIIGTVTGIFGIGLIGIF) form a helical membrane-spanning segment.

This sequence belongs to the PsbJ family. In terms of assembly, PSII is composed of 1 copy each of membrane proteins PsbA, PsbB, PsbC, PsbD, PsbE, PsbF, PsbH, PsbI, PsbJ, PsbK, PsbL, PsbM, PsbT, PsbX, PsbY, PsbZ, Psb30/Ycf12, at least 3 peripheral proteins of the oxygen-evolving complex and a large number of cofactors. It forms dimeric complexes.

The protein localises to the plastid membrane. Functionally, one of the components of the core complex of photosystem II (PSII). PSII is a light-driven water:plastoquinone oxidoreductase that uses light energy to abstract electrons from H(2)O, generating O(2) and a proton gradient subsequently used for ATP formation. It consists of a core antenna complex that captures photons, and an electron transfer chain that converts photonic excitation into a charge separation. The protein is Photosystem II reaction center protein J of Cuscuta reflexa (Southern Asian dodder).